Reading from the N-terminus, the 863-residue chain is MDARGGGGRPGDSPGTTPAPGPPPPPPPPAPPQPQPPPAPPPNPTTPSHPESADEPGPRARLCSRDSACTPGAAKGGANGECGRGEPQCSPEGPARGPKVSFSCRGAASGPSAAEEAGSEEAGPAGEPRGSQASFLQRQFGALLQPGVNKFSLRMFGSQKAVEREQERVKSAGAWIIHPYSDFRFYWDFTMLLFMVGNLIIIPVGITFFKDETTAPWIVFNVVSDTFFLMDLVLNFRTGIVIEDNTEIILDPEKIKKKYLRTWFVVDFVSSIPVDYIFLIVEKGIDSEVYKTARALRIVRFTKILSLLRLLRLSRLIRYIHQWEEIFHMTYDLASAVMRICNLISMMLLLCHWDGCLQFLVPMLQDFPSDCWVSINNMVNHSWSELYSFALFKAMSHMLCIGYGRQAPESMTDIWLTMLSMIVGATCYAMFIGHATALIQSLDSSRRQYQEKYKQVEQYMSFHKLPADFRQKIHDYYEHRYQGKMFDEDSILGELNGPLREEIVNFNCRKLVASMPLFANADPNFVTAMLTKLKFEVFQPGDYIIREGTIGKKMYFIQHGVVSVLTKGNKEMKLSDGSYFGEICLLTRGRRTASVRADTYCRLYSLSVDNFNEVLEEYPMMRRAFETVAIDRLDRIGKKNSILLHKVQHDLSSGVFNNQENAIIQEIVKYDREMVQQAELGQRVGLFPPPPPPQVTSAIATLQQAVAMSFCPQVARPLVGPLALGSPRLVRRAPPGPLPPAASPGPPAASPPAAPSSPRAPRTSPYGVPGSPATRVGPALPARRLSRASRPLSASQPSLPHGVPAPSPAASARPASSSTPRLGPAPTARTAAPSPDRRDSASPGAASGLDPLDSARSRLSSNL.

The span at 1 to 10 (MDARGGGGRP) shows a compositional bias: gly residues. Residues 1–131 (MDARGGGGRP…AGPAGEPRGS (131 aa)) are disordered. At 1–188 (MDARGGGGRP…PYSDFRFYWD (188 aa)) the chain is on the cytoplasmic side. Residues 17–47 (TPAPGPPPPPPPPAPPQPQPPPAPPPNPTTP) show a composition bias toward pro residues. Residues 106 to 128 (GAASGPSAAEEAGSEEAGPAGEP) show a composition bias toward low complexity. Residues Ser-119 and Ser-134 each carry the phosphoserine modification. Residues 131-182 (SQASFLQRQFGALLQPGVNKFSLRMFGSQKAVEREQERVKSAGAWIIHPYSD) form an involved in subunit assembly region. A helical membrane pass occupies residues 189–209 (FTMLLFMVGNLIIIPVGITFF). The Extracellular segment spans residues 210-213 (KDET). A helical transmembrane segment spans residues 214 to 234 (TAPWIVFNVVSDTFFLMDLVL). At 235 to 261 (NFRTGIVIEDNTEIILDPEKIKKKYLR) the chain is on the cytoplasmic side. The chain crosses the membrane as a helical span at residues 262–282 (TWFVVDFVSSIPVDYIFLIVE). At 283–290 (KGIDSEVY) the chain is on the extracellular side. The helical; Voltage-sensor transmembrane segment at 291–311 (KTARALRIVRFTKILSLLRLL) threads the bilayer. At 312–342 (RLSRLIRYIHQWEEIFHMTYDLASAVMRICN) the chain is on the cytoplasmic side. The chain crosses the membrane as a helical span at residues 343–363 (LISMMLLLCHWDGCLQFLVPM). Residues 364–386 (LQDFPSDCWVSINNMVNHSWSEL) lie on the Extracellular side of the membrane. Asn-380 carries N-linked (GlcNAc...) asparagine glycosylation. The pore-forming intramembrane region spans 387 to 408 (YSFALFKAMSHMLCIGYGRQAP). Topologically, residues 409–413 (ESMTD) are extracellular. The helical transmembrane segment at 414 to 434 (IWLTMLSMIVGATCYAMFIGH) threads the bilayer. The Cytoplasmic segment spans residues 435-863 (ATALIQSLDS…SARSRLSSNL (429 aa)). Positions 581, 582, 584, 591, 592, and 632 each coordinate 3',5'-cyclic AMP. A Phosphoserine; by PKG/PRKG2 modification is found at Ser-641. Ser-726 is subject to Phosphoserine. Arg-728 carries the post-translational modification Omega-N-methylarginine. The segment at 730-863 (VRRAPPGPLP…SARSRLSSNL (134 aa)) is disordered. Residues 734 to 755 (PPGPLPPAASPGPPAASPPAAP) are compositionally biased toward pro residues. Phosphoserine is present on residues Ser-743, Ser-750, and Ser-757. Composition is skewed to low complexity over residues 756-765 (SSPRAPRTSP), 778-800 (PALP…PSLP), and 808-834 (PAAS…AAPS). Residues Ser-840, Ser-842, and Ser-847 each carry the phosphoserine modification.

It belongs to the potassium channel HCN family. As to quaternary structure, homotetramer. The channel is composed of a homo- or heterotetrameric complex of pore-forming subunits. Heterotetramer with HCN1. Forms an obligate 4:4 complex with accessory subunit PEX5L; regulates HCN2 cell-surface expression and cyclic nucleotide dependence. Interacts with KCNE2. S-palmitoylated. In terms of processing, N-glycosylated; required for cell surface trafficking of HCN2. Post-translationally, phosphorylation at Ser-641 by PRKG2 shifts the voltage-dependence to more negative voltages, hence counteracting the stimulatory effect of cGMP on gating. Highly expressed in brain. Detected at low levels in heart, in ventricle, atrium and in sinoatrial node (SAN).

The protein resides in the cell membrane. It carries out the reaction Na(+)(in) = Na(+)(out). The catalysed reaction is K(+)(in) = K(+)(out). The enzyme catalyses NH4(+)(in) = NH4(+)(out). Activated by cAMP, and at 10-100 times higher concentrations, also by cGMP. cAMP binding causes a conformation change that leads to the assembly of an active tetramer and channel opening. In the absence of cAMP, the C-terminal region is thought to exert a tonic inhibition on the pore when HCN2 is in a non-tetrameric form. Channel activity is modulated by intracellular chloride ions and pH; acidic pH shifts the activation to more negative voltages. Phosphatidylinositol-4,5- bisphosphate (PIP(2)) acts as a ligand that allosterically opens HCN2 by shifting voltage-dependent channel activation toward depolarized potentials. Inhibited by extracellular cesium ions. Its function is as follows. Hyperpolarization-activated ion channel exhibiting weak selectivity for potassium over sodium ions. Contributes to the native pacemaker currents in heart (If) and in neurons (Ih). Can also transport ammonium in the distal nephron. Involved in the initiation of neuropathic pain in sensory neurons. In Mus musculus (Mouse), this protein is Potassium/sodium hyperpolarization-activated cyclic nucleotide-gated channel 2.